The following is a 190-amino-acid chain: Transcription termination/antitermination protein NusG (190 aa).

Residues Val-138–Leu-166 form the KOW domain.

The protein belongs to the NusG family.

Functionally, participates in transcription elongation, termination and antitermination. The protein is Transcription termination/antitermination protein NusG of Rickettsia bellii (strain RML369-C).